The following is a 303-amino-acid chain: Flavin-dependent thymidylate synthase (303 aa).

The 218-residue stretch at 41–258 (GKVALVDTMP…PVACEAFIDY (218 aa)) folds into the ThyX domain. FAD contacts are provided by residues Ser-95, 118–120 (RHR), and Glu-126. Residues 115 to 118 (QWIR), 126 to 130 (EYSAR), and Arg-197 each bind dUMP. The ThyX motif signature appears at 118–128 (RHRTANVNEYS). FAD is bound by residues 213 to 215 (DLH) and His-219. Arg-224 serves as a coordination point for dUMP. Arg-224 (involved in ionization of N3 of dUMP, leading to its activation) is an active-site residue.

It belongs to the thymidylate synthase ThyX family. As to quaternary structure, homotetramer. It depends on FAD as a cofactor.

It catalyses the reaction dUMP + (6R)-5,10-methylene-5,6,7,8-tetrahydrofolate + NADPH + H(+) = dTMP + (6S)-5,6,7,8-tetrahydrofolate + NADP(+). It participates in pyrimidine metabolism; dTTP biosynthesis. In terms of biological role, catalyzes the reductive methylation of 2'-deoxyuridine-5'-monophosphate (dUMP) to 2'-deoxythymidine-5'-monophosphate (dTMP) while utilizing 5,10-methylenetetrahydrofolate (mTHF) as the methyl donor, and NADPH and FADH(2) as the reductant. The chain is Flavin-dependent thymidylate synthase (thyA) from Dictyostelium discoideum (Social amoeba).